Reading from the N-terminus, the 966-residue chain is MANRNVEKLASIDAQLRLLVPGKVSEDDKLVEYDALLLDKFLDILQDLHGEDLKEAVQQCYELSAEYEGKHDPKKLEELGSLLTSLDTGDSIVIAKAFSHMLNLANLAEELQIAYRRRIKLKSGDFADEANATTESDIEETFKRLVHKLNKSPEEVFDALKNQTVELVLTAHPTQSVRRSLLQKHGRIRNCLAQLYAKDITPDDKQELDEALHREIQAAFRTDEIRRTPPTPQDEMRAGMSYFHETIWKGVPKFLRRVDTALKNIGINERFPYNAPLIQFSSWMGGDRDGNPRVTPEVTRDVCLLARMMTSNMYFSQIEDLMIEMSMWRCNSELRVRAEELYRTARKDVKHYIEFWKRIPPNQPYRVILGDVRDKLYNTRERSRHLLVDGKSDIPDEAVYTNVEQLLEPLELCYRSLCDCGDHVIADGSLLDFLRQVSTFGLSLVKLDIRQESDRHTEVLDAITQHLGIGSYREWSEEKRQEWLLAELSGKRPLIGPDLPKTEEVKDCLDTFKVLAELPSDCFGAYIISMATSTSDVLAVELLQREYHIKHPLRVVPLFEKLADLEAAPAAMTRLFSMDWYRNRIDGKQEVMIGYSDSGKDAGRFSAAWQLYKTQEQIVKIAKEFGVKLVIFHGRGGTVGRGGGPTHLALLSQPPDTINGSLRVTVQGEVIEQSFGEEHLCFRTLQRFCAATLEHGMNPPISPRPEWRELMDQMAVVATEEYRSVVFKEPRFVEYFRLATPELEFGRMNIGSRPSKRKPSGGIESLRAIPWIFSWTQTRFHLPVWLGFGAAFKHAIQKDSKNLQMLQEMYKTWPFFRVTIDLVEMVFAKGNPGIAALNDKLLVSEDLRPFGESLRANYEETKNYLLKIAGHKDLLEGDPYLKQGIRLRDPYITTLNVCQAYTLKRIRDPNYHVTLRPHISKEYAAEPSKPADELIHLNPTSEYAPGLEDTLILTMKGIAAGMQNTG.

A Phosphoserine modification is found at Ser-11. His-172 is an active-site residue. D-glucose 6-phosphate-binding residues include Trp-283, Arg-450, and Asp-597. Lys-600 is an active-site residue. Residue Arg-635 participates in D-glucose 6-phosphate binding. The active site involves Arg-641. Residue Arg-641 coordinates L-aspartate. Residue Thr-665 participates in D-glucose 6-phosphate binding. Gln-673 provides a ligand contact to L-aspartate. D-glucose 6-phosphate contacts are provided by residues Arg-753 and 767 to 769 (RAI). Residues Lys-829, Arg-888, and Asn-964 each coordinate L-aspartate.

Belongs to the PEPCase type 1 family. In terms of assembly, homotetramer. It depends on Mg(2+) as a cofactor. As to expression, expressed in mesophyll cells, but not in bundle-sheath, roots, stems and flowers.

Its subcellular location is the cytoplasm. The catalysed reaction is oxaloacetate + phosphate = phosphoenolpyruvate + hydrogencarbonate. Its pathway is photosynthesis; C4 acid pathway. 5 fold activation by the allosteric regulator glucose-6-phosphate. Low sensitivity to inhibition by L-malate and L-aspartate. Up-regulated by light-reversible phosphorylation. Functionally, forms oxaloacetate through the carboxylation of phosphoenolpyruvate (PEP). Catalyzes the first step of C4 photosynthesis. This chain is C4 phosphoenolpyruvate carboxylase, found in Flaveria trinervia (Clustered yellowtops).